A 347-amino-acid polypeptide reads, in one-letter code: Heat-inducible transcription repressor HrcA (347 aa).

This sequence belongs to the HrcA family.

Functionally, negative regulator of class I heat shock genes (grpE-dnaK-dnaJ and groELS operons). Prevents heat-shock induction of these operons. The protein is Heat-inducible transcription repressor HrcA of Rhodococcus erythropolis (strain PR4 / NBRC 100887).